Here is a 145-residue protein sequence, read N- to C-terminus: Large ribosomal subunit protein uL13 (145 aa).

This sequence belongs to the universal ribosomal protein uL13 family. As to quaternary structure, part of the 50S ribosomal subunit.

In terms of biological role, this protein is one of the early assembly proteins of the 50S ribosomal subunit, although it is not seen to bind rRNA by itself. It is important during the early stages of 50S assembly. The polypeptide is Large ribosomal subunit protein uL13 (Haloquadratum walsbyi (strain DSM 16790 / HBSQ001)).